The chain runs to 353 residues: Chorismate synthase (353 aa).

Arg-48 is a binding site for NADP(+). FMN-binding positions include 125–127 (RSS), 238–239 (NA), Gly-278, 293–297 (KPTSS), and Arg-319.

Belongs to the chorismate synthase family. Homotetramer. The cofactor is FMNH2.

The enzyme catalyses 5-O-(1-carboxyvinyl)-3-phosphoshikimate = chorismate + phosphate. It participates in metabolic intermediate biosynthesis; chorismate biosynthesis; chorismate from D-erythrose 4-phosphate and phosphoenolpyruvate: step 7/7. Catalyzes the anti-1,4-elimination of the C-3 phosphate and the C-6 proR hydrogen from 5-enolpyruvylshikimate-3-phosphate (EPSP) to yield chorismate, which is the branch point compound that serves as the starting substrate for the three terminal pathways of aromatic amino acid biosynthesis. This reaction introduces a second double bond into the aromatic ring system. This Buchnera aphidicola subsp. Cinara cedri (strain Cc) protein is Chorismate synthase.